Consider the following 266-residue polypeptide: Type III pantothenate kinase (266 aa).

6–13 (DIGNSRIK) contacts ATP. Residues Y94 and 101–104 (GIDR) each bind substrate. Catalysis depends on D103, which acts as the Proton acceptor. K(+) is bound at residue D128. T131 is an ATP binding site. A substrate-binding site is contributed by T183.

Belongs to the type III pantothenate kinase family. As to quaternary structure, homodimer. NH4(+) is required as a cofactor. K(+) serves as cofactor.

It localises to the cytoplasm. It catalyses the reaction (R)-pantothenate + ATP = (R)-4'-phosphopantothenate + ADP + H(+). It participates in cofactor biosynthesis; coenzyme A biosynthesis; CoA from (R)-pantothenate: step 1/5. In terms of biological role, catalyzes the phosphorylation of pantothenate (Pan), the first step in CoA biosynthesis. The sequence is that of Type III pantothenate kinase from Nitrosococcus oceani (strain ATCC 19707 / BCRC 17464 / JCM 30415 / NCIMB 11848 / C-107).